Reading from the N-terminus, the 369-residue chain is Maltose/maltodextrin import ATP-binding protein MalK (369 aa).

An ABC transporter domain is found at 4-234 (VTLSSVYKAF…PANRFVAGFI (231 aa)). 36 to 43 (GPSGCGKS) is a binding site for ATP.

This sequence belongs to the ABC transporter superfamily. Maltooligosaccharide importer (TC 3.A.1.1.1) family. The complex is composed of two ATP-binding proteins (MalK), two transmembrane proteins (MalG and MalK) and a solute-binding protein (MalE).

It localises to the cell inner membrane. It catalyses the reaction D-maltose(out) + ATP + H2O = D-maltose(in) + ADP + phosphate + H(+). In terms of biological role, part of the ABC transporter complex MalEFGK involved in maltose/maltodextrin import. Responsible for energy coupling to the transport system. In Yersinia pestis bv. Antiqua (strain Antiqua), this protein is Maltose/maltodextrin import ATP-binding protein MalK.